The following is a 176-amino-acid chain: Outer membrane protein assembly factor BamE (176 aa).

The N-terminal stretch at 1–21 is a signal peptide; sequence MQNAKLMLTCLAFAGLAALAG. Cys-22 is lipidated: N-palmitoyl cysteine. A lipid anchor (S-diacylglycerol cysteine) is attached at Cys-22. Residues 121–176 are disordered; sequence KEGSTTVTQPADQQKPEAQKEEPPKPGSTLEQLQREVDEAQPVPVPTPEPLDPSPQ. Over residues 123–132 the composition is skewed to polar residues; it reads GSTTVTQPAD. Basic and acidic residues predominate over residues 134–144; the sequence is QKPEAQKEEPP. Over residues 163 to 176 the composition is skewed to pro residues; the sequence is VPVPTPEPLDPSPQ.

This sequence belongs to the BamE family. As to quaternary structure, part of the Bam complex.

The protein localises to the cell outer membrane. In terms of biological role, part of the outer membrane protein assembly complex, which is involved in assembly and insertion of beta-barrel proteins into the outer membrane. May have a structural role in maintaining the cell envelope integrity. The protein is Outer membrane protein assembly factor BamE of Pseudomonas aeruginosa (strain ATCC 15692 / DSM 22644 / CIP 104116 / JCM 14847 / LMG 12228 / 1C / PRS 101 / PAO1).